The primary structure comprises 100 residues: Large ribosomal subunit protein bL27 (100 aa).

Residues 1–13 (MNKLYWLTDLQLF) constitute a propeptide that is removed on maturation. Residues 17 to 39 (KGVGSSKNGRDSNPKYLGAKLGD) form a disordered region.

The protein belongs to the bacterial ribosomal protein bL27 family. The N-terminus is cleaved by ribosomal processing cysteine protease Prp.

This chain is Large ribosomal subunit protein bL27, found in Ureaplasma parvum serovar 3 (strain ATCC 700970).